A 585-amino-acid chain; its full sequence is Arginine--tRNA ligase (585 aa).

Positions 131–141 (ANPTGPMHVGH) match the 'HIGH' region motif.

Belongs to the class-I aminoacyl-tRNA synthetase family. Monomer.

It localises to the cytoplasm. The catalysed reaction is tRNA(Arg) + L-arginine + ATP = L-arginyl-tRNA(Arg) + AMP + diphosphate. The polypeptide is Arginine--tRNA ligase (Brucella ovis (strain ATCC 25840 / 63/290 / NCTC 10512)).